The primary structure comprises 386 residues: MLKPVRIALDAMGGDVGPQAIIPGAARALQRLGDVRFRFYGDRAQVEPLLRQHPALADVSSVHHTDVTVRMDDKPSQALRAGRRVSSMWQAIEAVKTGEADVVLSAGNTGALMAMAKVCLRMLPGIDRPAIAGIWPTLRGRSIVLDIGATIGADAPHLVDLAIMGAAMARIVLKVERPRIGLLNVGVEEIKGLEEVKTASRLLRQLTLPSLVYHGFVEGDDIGRGTVDVVVTEGFTGNIALKTAEGTAKQIAQYIREEMGRSFWSKIGYLLARRAFDALKQKLDPRQINGGVFLGLDGIVIKSHGGSDTIGTANAIEISYAMARYEILSKIRESLDLTREARAALLVEGTGSLERMAAPHRARQDELGENKVVGADQSMTAKATGT.

Residues 359–386 (PHRARQDELGENKVVGADQSMTAKATGT) are disordered. The span at 377 to 386 (QSMTAKATGT) shows a compositional bias: polar residues.

This sequence belongs to the PlsX family. Homodimer. Probably interacts with PlsY.

The protein localises to the cytoplasm. It catalyses the reaction a fatty acyl-[ACP] + phosphate = an acyl phosphate + holo-[ACP]. It participates in lipid metabolism; phospholipid metabolism. Catalyzes the reversible formation of acyl-phosphate (acyl-PO(4)) from acyl-[acyl-carrier-protein] (acyl-ACP). This enzyme utilizes acyl-ACP as fatty acyl donor, but not acyl-CoA. The polypeptide is Phosphate acyltransferase (Beijerinckia indica subsp. indica (strain ATCC 9039 / DSM 1715 / NCIMB 8712)).